We begin with the raw amino-acid sequence, 191 residues long: CASP-like protein 4C3 (191 aa).

Topologically, residues 1-29 are cytoplasmic; the sequence is METGDSAVKSSQDVHYYGKSTAQKHRRSN. Residues 30–50 form a helical membrane-spanning segment; sequence GIILIFRALTFSFSLTSVIVM. Over 51-72 the chain is Extracellular; it reads GTNRHRIDAQSRVAWYDFDPFR. A helical membrane pass occupies residues 73-93; the sequence is YVLAVNAIICIYSFVEIWLAV. At 94-116 the chain is on the cytoplasmic side; sequence YTYLKDTLFLPETFQVWFDYGHD. The helical transmembrane segment at 117–137 threads the bilayer; it reads QGFAYLLFSANSAGIAMAQLL. The Extracellular segment spans residues 138–162; that stretch reads QSGNSLIHGAYRCSDAGVFCTQARA. Residues 163–183 traverse the membrane as a helical segment; sequence SIGLGFGAFLFLALSSLLTGL. Topologically, residues 184–191 are cytoplasmic; it reads RVARWYFS.

It belongs to the Casparian strip membrane proteins (CASP) family. As to quaternary structure, homodimer and heterodimers.

The protein localises to the cell membrane. This chain is CASP-like protein 4C3, found in Physcomitrium patens (Spreading-leaved earth moss).